A 197-amino-acid chain; its full sequence is Peptidyl-tRNA hydrolase (197 aa).

Tyr18 serves as a coordination point for tRNA. His23 functions as the Proton acceptor in the catalytic mechanism. Phe69, Asn71, and Asn117 together coordinate tRNA.

This sequence belongs to the PTH family. As to quaternary structure, monomer.

It localises to the cytoplasm. It carries out the reaction an N-acyl-L-alpha-aminoacyl-tRNA + H2O = an N-acyl-L-amino acid + a tRNA + H(+). Its function is as follows. Hydrolyzes ribosome-free peptidyl-tRNAs (with 1 or more amino acids incorporated), which drop off the ribosome during protein synthesis, or as a result of ribosome stalling. Catalyzes the release of premature peptidyl moieties from peptidyl-tRNA molecules trapped in stalled 50S ribosomal subunits, and thus maintains levels of free tRNAs and 50S ribosomes. The polypeptide is Peptidyl-tRNA hydrolase (Tolumonas auensis (strain DSM 9187 / NBRC 110442 / TA 4)).